The sequence spans 182 residues: UPF0149 protein CGSHiGG_07585 (182 aa).

Belongs to the UPF0149 family.

The polypeptide is UPF0149 protein CGSHiGG_07585 (Haemophilus influenzae (strain PittGG)).